Reading from the N-terminus, the 116-residue chain is Large ribosomal subunit protein bL20 (116 aa).

This sequence belongs to the bacterial ribosomal protein bL20 family.

Functionally, binds directly to 23S ribosomal RNA and is necessary for the in vitro assembly process of the 50S ribosomal subunit. It is not involved in the protein synthesizing functions of that subunit. The sequence is that of Large ribosomal subunit protein bL20 from Mycoplasmopsis agalactiae (strain NCTC 10123 / CIP 59.7 / PG2) (Mycoplasma agalactiae).